The following is a 324-amino-acid chain: Olfactory receptor 7G2 (324 aa).

Over 1–25 (MEARNQTAISKFLLLGLIEDPELQP) the chain is Extracellular. Residue Asn-5 is glycosylated (N-linked (GlcNAc...) asparagine). A helical membrane pass occupies residues 26 to 46 (VLFSLFLSMYLVTILGNLLIL). The Cytoplasmic segment spans residues 47–54 (LAVISDSH). Residues 55–75 (LHTPMYFFLSNLSFLDICLST) form a helical membrane-spanning segment. The Extracellular portion of the chain corresponds to 76–99 (TTIPKMLVNIQAQNRSITYSGCLT). An N-linked (GlcNAc...) asparagine glycan is attached at Asn-89. Cys-97 and Cys-189 are oxidised to a cystine. The chain crosses the membrane as a helical span at residues 100–120 (QICFVLFFAGLENCLLAAMAY). Residues 121–139 (DRYVAICHPLRYTVIMNPR) lie on the Cytoplasmic side of the membrane. A helical transmembrane segment spans residues 140 to 160 (LCGLLILLSLLTSVVNALLLS). Topologically, residues 161 to 197 (LMVLRLSFCTDLEIPLFFCELAQVIQLTCSDTLINNI) are extracellular. The helical transmembrane segment at 198–217 (LIYFAACIFGGVPLSGIILS) threads the bilayer. Residues 218 to 237 (YTQITSCVLRMPSASGKHKA) are Cytoplasmic-facing. Residues 238-258 (VSTCGSHLSIVLLFYGAGLGV) form a helical membrane-spanning segment. The Extracellular portion of the chain corresponds to 259–271 (YISSVVTDSPRKT). The helical transmembrane segment at 272-292 (AVASVMYSVFPQMVNPFIYSL) threads the bilayer. Topologically, residues 293-324 (RNKDMKGTLRKFIGRIPSLLWCAICFGFRFLE) are cytoplasmic.

The protein belongs to the G-protein coupled receptor 1 family.

Its subcellular location is the cell membrane. Odorant receptor. This is Olfactory receptor 7G2 (OR7G2) from Homo sapiens (Human).